We begin with the raw amino-acid sequence, 744 residues long: NADH-ubiquinone oxidoreductase 78 kDa subunit, mitochondrial (744 aa).

Positions 1–10 are enriched in polar residues; sequence MLRSTLSRSA. A disordered region spans residues 1-26; the sequence is MLRSTLSRSAWRTGRHQAARNASRAF. A mitochondrion-targeting transit peptide spans 1–33; sequence MLRSTLSRSAWRTGRHQAARNASRAFSATAQRP. A 2Fe-2S ferredoxin-type domain is found at 34-112; sequence AEVELTIDGK…GMVVKTNSPL (79 aa). [2Fe-2S] cluster is bound by residues cysteine 68, cysteine 79, cysteine 82, and cysteine 96. The region spanning 112-151 is the 4Fe-4S His(Cys)3-ligated-type domain; that stretch reads LTHKAREGVMEFLLANHPLDCPICDQGGECDLQDQSMRYG. 8 residues coordinate [4Fe-4S] cluster: histidine 128, cysteine 132, cysteine 135, cysteine 141, cysteine 182, cysteine 185, cysteine 188, and cysteine 232. A 4Fe-4S Mo/W bis-MGD-type domain is found at 251-307; it reads LKKTESIDVLDGLGSNIRVDTRGLEVMRILPRLNDEVNEEWINDKTRFACDGLKTQR.

This sequence belongs to the complex I 75 kDa subunit family. In terms of assembly, complex I is composed of about 40 different subunits. It depends on [2Fe-2S] cluster as a cofactor. Requires [4Fe-4S] cluster as cofactor.

The protein localises to the mitochondrion inner membrane. It catalyses the reaction a ubiquinone + NADH + 5 H(+)(in) = a ubiquinol + NAD(+) + 4 H(+)(out). Its function is as follows. Core subunit of the mitochondrial membrane respiratory chain NADH dehydrogenase (Complex I) that is believed to belong to the minimal assembly required for catalysis. Complex I functions in the transfer of electrons from NADH to the respiratory chain. The immediate electron acceptor for the enzyme is believed to be ubiquinone. This is the largest subunit of complex I and it is a component of the iron-sulfur (IP) fragment of the enzyme. It may form part of the active site crevice where NADH is oxidized. The polypeptide is NADH-ubiquinone oxidoreductase 78 kDa subunit, mitochondrial (nuo78) (Neurospora crassa (strain ATCC 24698 / 74-OR23-1A / CBS 708.71 / DSM 1257 / FGSC 987)).